We begin with the raw amino-acid sequence, 319 residues long: ATP-dependent 6-phosphofructokinase (319 aa).

Residue glycine 11 participates in ATP binding. Position 21-25 (21-25 (RAVVR)) interacts with ADP. ATP contacts are provided by residues 72 to 73 (RC) and 102 to 105 (GDGS). Aspartate 103 provides a ligand contact to Mg(2+). Position 125-127 (125-127 (TID)) interacts with substrate. Aspartate 127 acts as the Proton acceptor in catalysis. Arginine 154 contacts ADP. Residues arginine 162 and 169–171 (MGR) contribute to the substrate site. Residues 185-187 (GAE), arginine 211, and 213-215 (KKH) each bind ADP. Substrate-binding positions include glutamate 222, arginine 243, and 249–252 (HIQR).

The protein belongs to the phosphofructokinase type A (PFKA) family. ATP-dependent PFK group I subfamily. Prokaryotic clade 'B1' sub-subfamily. Homotetramer. The cofactor is Mg(2+).

It is found in the cytoplasm. It catalyses the reaction beta-D-fructose 6-phosphate + ATP = beta-D-fructose 1,6-bisphosphate + ADP + H(+). The protein operates within carbohydrate degradation; glycolysis; D-glyceraldehyde 3-phosphate and glycerone phosphate from D-glucose: step 3/4. Allosterically activated by ADP and other diphosphonucleosides, and allosterically inhibited by phosphoenolpyruvate. In terms of biological role, catalyzes the phosphorylation of D-fructose 6-phosphate to fructose 1,6-bisphosphate by ATP, the first committing step of glycolysis. This Bacillus licheniformis (strain ATCC 14580 / DSM 13 / JCM 2505 / CCUG 7422 / NBRC 12200 / NCIMB 9375 / NCTC 10341 / NRRL NRS-1264 / Gibson 46) protein is ATP-dependent 6-phosphofructokinase.